The primary structure comprises 505 residues: Glycerol kinase (505 aa).

Thr-12 contributes to the ADP binding site. Residues Thr-12, Thr-13, and Ser-14 each contribute to the ATP site. A sn-glycerol 3-phosphate-binding site is contributed by Thr-12. Residue Arg-16 coordinates ADP. Arg-82, Glu-83, Tyr-134, and Asp-246 together coordinate sn-glycerol 3-phosphate. Glycerol contacts are provided by Arg-82, Glu-83, Tyr-134, Asp-246, and Gln-247. Thr-268 and Gly-312 together coordinate ADP. Thr-268, Gly-312, Gln-316, and Gly-413 together coordinate ATP. The ADP site is built by Gly-413 and Asn-417.

This sequence belongs to the FGGY kinase family.

The catalysed reaction is glycerol + ATP = sn-glycerol 3-phosphate + ADP + H(+). Its pathway is polyol metabolism; glycerol degradation via glycerol kinase pathway; sn-glycerol 3-phosphate from glycerol: step 1/1. Its activity is regulated as follows. Inhibited by fructose 1,6-bisphosphate (FBP). In terms of biological role, key enzyme in the regulation of glycerol uptake and metabolism. Catalyzes the phosphorylation of glycerol to yield sn-glycerol 3-phosphate. The chain is Glycerol kinase from Beutenbergia cavernae (strain ATCC BAA-8 / DSM 12333 / CCUG 43141 / JCM 11478 / NBRC 16432 / NCIMB 13614 / HKI 0122).